The following is a 376-amino-acid chain: DNA replication and repair protein RecF (376 aa).

An ATP-binding site is contributed by 30 to 37 (GHNGVGKT).

The protein belongs to the RecF family.

Its subcellular location is the cytoplasm. The RecF protein is involved in DNA metabolism; it is required for DNA replication and normal SOS inducibility. RecF binds preferentially to single-stranded, linear DNA. It also seems to bind ATP. This is DNA replication and repair protein RecF from Salinispora arenicola (strain CNS-205).